The chain runs to 122 residues: Ribosomal silencing factor RsfS (122 aa).

Belongs to the Iojap/RsfS family. In terms of assembly, interacts with ribosomal protein uL14 (rplN).

It localises to the cytoplasm. Its function is as follows. Functions as a ribosomal silencing factor. Interacts with ribosomal protein uL14 (rplN), blocking formation of intersubunit bridge B8. Prevents association of the 30S and 50S ribosomal subunits and the formation of functional ribosomes, thus repressing translation. The polypeptide is Ribosomal silencing factor RsfS (Chromobacterium violaceum (strain ATCC 12472 / DSM 30191 / JCM 1249 / CCUG 213 / NBRC 12614 / NCIMB 9131 / NCTC 9757 / MK)).